We begin with the raw amino-acid sequence, 185 residues long: Adenine phosphoribosyltransferase (185 aa).

It belongs to the purine/pyrimidine phosphoribosyltransferase family. In terms of assembly, homodimer.

The protein localises to the cytoplasm. The catalysed reaction is AMP + diphosphate = 5-phospho-alpha-D-ribose 1-diphosphate + adenine. It participates in purine metabolism; AMP biosynthesis via salvage pathway; AMP from adenine: step 1/1. Functionally, catalyzes a salvage reaction resulting in the formation of AMP, that is energically less costly than de novo synthesis. This is Adenine phosphoribosyltransferase from Pectobacterium carotovorum subsp. carotovorum (strain PC1).